The following is an 84-amino-acid chain: Small ribosomal subunit protein bS16 (84 aa).

It belongs to the bacterial ribosomal protein bS16 family.

This is Small ribosomal subunit protein bS16 from Koribacter versatilis (strain Ellin345).